A 96-amino-acid polypeptide reads, in one-letter code: Putative translation initiation factor IF-1, chloroplastic (96 aa).

Positions 18–57 (INYVSGKIRHSFIRILPGDRVKIEVSPYDSTKGRIIYRLH) constitute an S1-like domain.

This sequence belongs to the IF-1 family. As to quaternary structure, component of the 30S ribosomal translation pre-initiation complex which assembles on the 30S ribosome in the order IF-2 and IF-3, IF-1 and N-formylmethionyl-tRNA(fMet); mRNA recruitment can occur at any time during PIC assembly.

The protein resides in the plastid. It is found in the chloroplast. One of the essential components for the initiation of protein synthesis. Stabilizes the binding of IF-2 and IF-3 on the 30S subunit to which N-formylmethionyl-tRNA(fMet) subsequently binds. Helps modulate mRNA selection, yielding the 30S pre-initiation complex (PIC). Upon addition of the 50S ribosomal subunit IF-1, IF-2 and IF-3 are released leaving the mature 70S translation initiation complex. This Nicotiana tabacum (Common tobacco) protein is Putative translation initiation factor IF-1, chloroplastic (infA).